A 394-amino-acid polypeptide reads, in one-letter code: Carbamoyl phosphate synthase small chain (394 aa).

A CPSase region spans residues 1 to 188 (MIRKERAILA…PLPYAFPTLR (188 aa)). Positions 49, 240, and 242 each coordinate L-glutamine. Residues 192–379 (RVVLMDFGIK…IEEIDAFEGA (188 aa)) enclose the Glutamine amidotransferase type-1 domain. Cys267 serves as the catalytic Nucleophile. The L-glutamine site is built by Leu268, Gln271, Asn309, Gly311, and Tyr312. Residues His352 and Glu354 contribute to the active site.

It belongs to the CarA family. In terms of assembly, composed of two chains; the small (or glutamine) chain promotes the hydrolysis of glutamine to ammonia, which is used by the large (or ammonia) chain to synthesize carbamoyl phosphate. Tetramer of heterodimers (alpha,beta)4.

It catalyses the reaction hydrogencarbonate + L-glutamine + 2 ATP + H2O = carbamoyl phosphate + L-glutamate + 2 ADP + phosphate + 2 H(+). It carries out the reaction L-glutamine + H2O = L-glutamate + NH4(+). The protein operates within amino-acid biosynthesis; L-arginine biosynthesis; carbamoyl phosphate from bicarbonate: step 1/1. It functions in the pathway pyrimidine metabolism; UMP biosynthesis via de novo pathway; (S)-dihydroorotate from bicarbonate: step 1/3. Its function is as follows. Small subunit of the glutamine-dependent carbamoyl phosphate synthetase (CPSase). CPSase catalyzes the formation of carbamoyl phosphate from the ammonia moiety of glutamine, carbonate, and phosphate donated by ATP, constituting the first step of 2 biosynthetic pathways, one leading to arginine and/or urea and the other to pyrimidine nucleotides. The small subunit (glutamine amidotransferase) binds and cleaves glutamine to supply the large subunit with the substrate ammonia. This Deinococcus geothermalis (strain DSM 11300 / CIP 105573 / AG-3a) protein is Carbamoyl phosphate synthase small chain.